We begin with the raw amino-acid sequence, 148 residues long: Small ribosomal subunit protein bS6 (148 aa).

Positions 97-148 (EEGPSAMLQRRDDRERGDRGDRGPRRDFDDRGPRRPREDDRPRRSREDEGDE) are disordered.

Belongs to the bacterial ribosomal protein bS6 family.

Its function is as follows. Binds together with bS18 to 16S ribosomal RNA. The sequence is that of Small ribosomal subunit protein bS6 from Chelativorans sp. (strain BNC1).